The primary structure comprises 563 residues: Light-independent protochlorophyllide reductase subunit B (563 aa).

Asp36 provides a ligand contact to [4Fe-4S] cluster. The active-site Proton donor is Asp349. 484 to 485 (GM) provides a ligand contact to substrate.

It belongs to the ChlB/BchB/BchZ family. In terms of assembly, protochlorophyllide reductase is composed of three subunits; ChlL, ChlN and ChlB. Forms a heterotetramer of two ChlB and two ChlN subunits. Requires [4Fe-4S] cluster as cofactor.

The protein resides in the plastid. It localises to the chloroplast. The catalysed reaction is chlorophyllide a + oxidized 2[4Fe-4S]-[ferredoxin] + 2 ADP + 2 phosphate = protochlorophyllide a + reduced 2[4Fe-4S]-[ferredoxin] + 2 ATP + 2 H2O. It participates in porphyrin-containing compound metabolism; chlorophyll biosynthesis (light-independent). In terms of biological role, component of the dark-operative protochlorophyllide reductase (DPOR) that uses Mg-ATP and reduced ferredoxin to reduce ring D of protochlorophyllide (Pchlide) to form chlorophyllide a (Chlide). This reaction is light-independent. The NB-protein (ChlN-ChlB) is the catalytic component of the complex. The protein is Light-independent protochlorophyllide reductase subunit B of Chlamydomonas moewusii (Chlamydomonas eugametos).